Consider the following 220-residue polypeptide: Large ribosomal subunit protein uL3 (220 aa).

Belongs to the universal ribosomal protein uL3 family. Part of the 50S ribosomal subunit. Forms a cluster with proteins L14 and L19.

Functionally, one of the primary rRNA binding proteins, it binds directly near the 3'-end of the 23S rRNA, where it nucleates assembly of the 50S subunit. This chain is Large ribosomal subunit protein uL3, found in Staphylococcus carnosus (strain TM300).